The chain runs to 125 residues: Temptin (125 aa).

An N-terminal signal peptide occupies residues 1–22 (MEQKRTLRVFLAVSLLCALANA). 2 disulfides stabilise this stretch: cysteine 40/cysteine 125 and cysteine 79/cysteine 99. Residues 78-125 (LCDMDSDGDGRSNGVELGDPECVWSQGETPARTTDLSHPGFDEATVSC) form a disordered region. Positions 103–113 (QGETPARTTDL) are enriched in polar residues.

In terms of assembly, binds to attractin and enticin. Produced by the albumen gland of the egg cordons.

It is found in the secreted. In terms of biological role, a component of the complex of water-borne protein pheromones that stimulates attraction and mating behavior. Modulates pheromone signaling by direct binding to attractin. This Aplysia californica (California sea hare) protein is Temptin.